A 219-amino-acid polypeptide reads, in one-letter code: tRNA (guanine-N(7)-)-methyltransferase (219 aa).

S-adenosyl-L-methionine contacts are provided by Glu-43, Asp-68, Glu-101, and Asn-124. The substrate site is built by Lys-128 and Asp-160.

It belongs to the class I-like SAM-binding methyltransferase superfamily. TrmB family.

The enzyme catalyses guanosine(46) in tRNA + S-adenosyl-L-methionine = N(7)-methylguanosine(46) in tRNA + S-adenosyl-L-homocysteine. The protein operates within tRNA modification; N(7)-methylguanine-tRNA biosynthesis. Functionally, catalyzes the formation of N(7)-methylguanine at position 46 (m7G46) in tRNA. The polypeptide is tRNA (guanine-N(7)-)-methyltransferase (Clostridium botulinum (strain Eklund 17B / Type B)).